The sequence spans 124 residues: Large ribosomal subunit protein bL12 (124 aa).

A disordered region spans residues 99-124 (KEGMNKEDAEKAKADLEAAGAKVELK). The span at 101–114 (GMNKEDAEKAKADL) shows a compositional bias: basic and acidic residues. Residues 115–124 (EAAGAKVELK) are compositionally biased toward low complexity.

This sequence belongs to the bacterial ribosomal protein bL12 family. As to quaternary structure, homodimer. Part of the ribosomal stalk of the 50S ribosomal subunit. Forms a multimeric L10(L12)X complex, where L10 forms an elongated spine to which 2 to 4 L12 dimers bind in a sequential fashion. Binds GTP-bound translation factors.

Forms part of the ribosomal stalk which helps the ribosome interact with GTP-bound translation factors. Is thus essential for accurate translation. In Campylobacter hominis (strain ATCC BAA-381 / DSM 21671 / CCUG 45161 / LMG 19568 / NCTC 13146 / CH001A), this protein is Large ribosomal subunit protein bL12.